The primary structure comprises 513 residues: NAD(P)H-quinone oxidoreductase subunit 2 (513 aa).

14 consecutive transmembrane segments (helical) span residues 12–32 (TLWP…VDLI), 41–61 (LPYL…PMWI), 77–97 (LSVV…LMSV), 104–124 (SLAT…AMLL), 130–150 (MAMI…LSGY), 165–185 (LLIG…LYGF), 199–219 (IVNL…GICF), 238–258 (PTPV…ALAI), 272–292 (WQTL…VVAI), 300–320 (MLAY…AIGT), 328–348 (ILYI…VVLF), 372–392 (LVLS…GFFG), 394–414 (LYLF…FGLV), and 456–476 (AGML…PPLI). A compositionally biased stretch (polar residues) spans 494 to 505 (TATPVSRVSTGA). Positions 494 to 513 (TATPVSRVSTGAQAPADHGR) are disordered.

It belongs to the complex I subunit 2 family. In terms of assembly, NDH-1 can be composed of about 15 different subunits; different subcomplexes with different compositions have been identified which probably have different functions.

It is found in the cell inner membrane. The catalysed reaction is a plastoquinone + NADH + (n+1) H(+)(in) = a plastoquinol + NAD(+) + n H(+)(out). It carries out the reaction a plastoquinone + NADPH + (n+1) H(+)(in) = a plastoquinol + NADP(+) + n H(+)(out). Its function is as follows. NDH-1 shuttles electrons from an unknown electron donor, via FMN and iron-sulfur (Fe-S) centers, to quinones in the respiratory and/or the photosynthetic chain. The immediate electron acceptor for the enzyme in this species is believed to be plastoquinone. Couples the redox reaction to proton translocation, and thus conserves the redox energy in a proton gradient. Cyanobacterial NDH-1 also plays a role in inorganic carbon-concentration. The sequence is that of NAD(P)H-quinone oxidoreductase subunit 2 from Gloeobacter violaceus (strain ATCC 29082 / PCC 7421).